Here is a 421-residue protein sequence, read N- to C-terminus: Polygalacturonase (421 aa).

The first 20 residues, M1–A20, serve as a signal peptide directing secretion. Residues N156 and N180 are each glycosylated (N-linked (GlcNAc...) asparagine). PbH1 repeat units follow at residues C178 to K204 and S205 to D226. Catalysis depends on D219, which acts as the Proton donor. H242 is a catalytic residue. 2 PbH1 repeats span residues V258–T279 and V289–Q310. N265 carries an N-linked (GlcNAc...) asparagine glycan. The segment at P394 to K421 is disordered.

Belongs to the glycosyl hydrolase 28 family. As to expression, pollen specific.

Its subcellular location is the secreted. It is found in the cell wall. The catalysed reaction is (1,4-alpha-D-galacturonosyl)n+m + H2O = (1,4-alpha-D-galacturonosyl)n + (1,4-alpha-D-galacturonosyl)m.. May function in the depolymerization of the pectin in its walls during pollen tube elongation, or in that of the pistil during pollination. The polypeptide is Polygalacturonase (Medicago sativa (Alfalfa)).